The sequence spans 552 residues: Cytochrome P450 97B1, chloroplastic (552 aa).

A chloroplast-targeting transit peptide spans 1–52 (MVAAPISTVKLTDANLHTRFHSSSSSTPSTLSLPLSLHFHFSSHSKRFSSIR). Residue Cys-528 coordinates heme.

The protein belongs to the cytochrome P450 family. It depends on heme as a cofactor.

It is found in the plastid. The protein localises to the chloroplast membrane. This Pisum sativum (Garden pea) protein is Cytochrome P450 97B1, chloroplastic (CYP97B1).